A 293-amino-acid chain; its full sequence is tRNA pseudouridine synthase B (293 aa).

D39 serves as the catalytic Nucleophile.

This sequence belongs to the pseudouridine synthase TruB family. Type 1 subfamily.

It carries out the reaction uridine(55) in tRNA = pseudouridine(55) in tRNA. Responsible for synthesis of pseudouridine from uracil-55 in the psi GC loop of transfer RNAs. The polypeptide is tRNA pseudouridine synthase B (Streptococcus mutans serotype c (strain ATCC 700610 / UA159)).